The following is a 312-amino-acid chain: MEIIFYHPTFNAAWWVNALEKALPHARVREWKVGDNNPADYALVWQPPVEMLAGRRLKAVFVLGAGVDAILSKLNAHPEMLDASIPLFRLEDTGMGLQMQEYAASQVLHWFRRFDDYQALKNQALWKPLPEYTREEFSVGIIGAGVLGAKVAESLQAWGFPLRCWSRSRKSWPGVESYVGREELRAFLNQTRVLINLLPNTAQTVGIINSELLDQLPDGAYVLNLARGVHVQEADLLAALDSGKLKGAMLDVFSQEPLPQESPLWRHPRVAMTPHIAAVTRPAEAIDYISRTITQLEKGEPVTGQVDRARGY.

Arginine 227 is an active-site residue. Histidine 275 serves as the catalytic Proton donor.

Belongs to the D-isomer specific 2-hydroxyacid dehydrogenase family. GhrA subfamily.

The protein localises to the cytoplasm. The enzyme catalyses glycolate + NADP(+) = glyoxylate + NADPH + H(+). It carries out the reaction (R)-glycerate + NAD(+) = 3-hydroxypyruvate + NADH + H(+). It catalyses the reaction (R)-glycerate + NADP(+) = 3-hydroxypyruvate + NADPH + H(+). Catalyzes the NADPH-dependent reduction of glyoxylate and hydroxypyruvate into glycolate and glycerate, respectively. The polypeptide is Glyoxylate/hydroxypyruvate reductase A (Salmonella typhi).